The chain runs to 348 residues: Protein RecA (348 aa).

65 to 72 (GPESSGKT) lines the ATP pocket.

It belongs to the RecA family.

It localises to the cytoplasm. Its function is as follows. Can catalyze the hydrolysis of ATP in the presence of single-stranded DNA, the ATP-dependent uptake of single-stranded DNA by duplex DNA, and the ATP-dependent hybridization of homologous single-stranded DNAs. It interacts with LexA causing its activation and leading to its autocatalytic cleavage. The polypeptide is Protein RecA (Enterococcus faecalis (strain ATCC 700802 / V583)).